Consider the following 228-residue polypeptide: Uracil-DNA glycosylase (228 aa).

Aspartate 64 acts as the Proton acceptor in catalysis.

Belongs to the uracil-DNA glycosylase (UDG) superfamily. UNG family.

The protein localises to the cytoplasm. The enzyme catalyses Hydrolyzes single-stranded DNA or mismatched double-stranded DNA and polynucleotides, releasing free uracil.. In terms of biological role, excises uracil residues from the DNA which can arise as a result of misincorporation of dUMP residues by DNA polymerase or due to deamination of cytosine. The polypeptide is Uracil-DNA glycosylase (Yersinia pestis bv. Antiqua (strain Antiqua)).